Here is a 232-residue protein sequence, read N- to C-terminus: Large ribosomal subunit protein uL1 (232 aa).

It belongs to the universal ribosomal protein uL1 family. In terms of assembly, part of the 50S ribosomal subunit.

Functionally, binds directly to 23S rRNA. The L1 stalk is quite mobile in the ribosome, and is involved in E site tRNA release. Protein L1 is also a translational repressor protein, it controls the translation of the L11 operon by binding to its mRNA. The chain is Large ribosomal subunit protein uL1 from Marinobacter nauticus (strain ATCC 700491 / DSM 11845 / VT8) (Marinobacter aquaeolei).